Reading from the N-terminus, the 222-residue chain is ATP-dependent dethiobiotin synthetase BioD (222 aa).

An ATP-binding site is contributed by 12–17 (DVGKTI). Thr-16 is a Mg(2+) binding site. Lys-37 is an active-site residue. Thr-41 contacts substrate. Residues Asp-49, 107–110 (EGAG), 167–168 (GS), and 197–199 (AEG) each bind ATP. The Mg(2+) site is built by Asp-49 and Glu-107.

The protein belongs to the dethiobiotin synthetase family. In terms of assembly, homodimer. It depends on Mg(2+) as a cofactor.

It is found in the cytoplasm. The catalysed reaction is (7R,8S)-7,8-diammoniononanoate + CO2 + ATP = (4R,5S)-dethiobiotin + ADP + phosphate + 3 H(+). Its pathway is cofactor biosynthesis; biotin biosynthesis; biotin from 7,8-diaminononanoate: step 1/2. In terms of biological role, catalyzes a mechanistically unusual reaction, the ATP-dependent insertion of CO2 between the N7 and N8 nitrogen atoms of 7,8-diaminopelargonic acid (DAPA, also called 7,8-diammoniononanoate) to form a ureido ring. The protein is ATP-dependent dethiobiotin synthetase BioD of Corynebacterium diphtheriae (strain ATCC 700971 / NCTC 13129 / Biotype gravis).